The chain runs to 247 residues: Killer cell lectin-like receptor subfamily I member 2 (247 aa).

Positions 1 to 12 (MPRKKQNERGTN) are enriched in basic and acidic residues. Positions 1 to 39 (MPRKKQNERGTNKQEIINIETKSSTFQEKQRQSKTDQIS) are disordered. Residues 1-79 (MPRKKQNERG…GTDPWLTTWR (79 aa)) lie on the Cytoplasmic side of the membrane. A helical membrane pass occupies residues 80 to 100 (IITVILGTSCIILVTKVGFLI). At 101–247 (PNLFSRGEKR…KAYTCEFNLQ (147 aa)) the chain is on the extracellular side. 4 N-linked (GlcNAc...) asparagine glycosylation sites follow: Asn125, Asn196, Asn212, and Asn218. One can recognise a C-type lectin domain in the interval 139–243 (FGNNFYLFFR…CSSKKAYTCE (105 aa)). 2 cysteine pairs are disulfide-bonded: Cys160-Cys242 and Cys221-Cys234.

In terms of assembly, heterodimer with KLRE1. In terms of tissue distribution, expressed in natural killer (NK) cells.

The protein resides in the cell membrane. Functionally, lectin-like receptor for natural killer (NK) cells. Heterodimer formation with KLRE1 mediates NK cell cytolytic activity. The chain is Killer cell lectin-like receptor subfamily I member 2 from Rattus norvegicus (Rat).